The following is a 233-amino-acid chain: Putative N-acetylmannosamine-6-phosphate 2-epimerase (233 aa).

The protein belongs to the NanE family.

It catalyses the reaction an N-acyl-D-glucosamine 6-phosphate = an N-acyl-D-mannosamine 6-phosphate. It participates in amino-sugar metabolism; N-acetylneuraminate degradation; D-fructose 6-phosphate from N-acetylneuraminate: step 3/5. Converts N-acetylmannosamine-6-phosphate (ManNAc-6-P) to N-acetylglucosamine-6-phosphate (GlcNAc-6-P). The protein is Putative N-acetylmannosamine-6-phosphate 2-epimerase of Yersinia pseudotuberculosis serotype O:1b (strain IP 31758).